The primary structure comprises 488 residues: Malonate-semialdehyde dehydrogenase (488 aa).

Residues alanine 150, phenylalanine 152, lysine 176, glutamate 179, arginine 180, serine 229, and threonine 251 each contribute to the NAD(+) site. The Nucleophile role is filled by cysteine 284. Glutamate 382 serves as a coordination point for NAD(+).

Belongs to the aldehyde dehydrogenase family. IolA subfamily. Homotetramer.

It carries out the reaction 3-oxopropanoate + NAD(+) + CoA + H2O = hydrogencarbonate + acetyl-CoA + NADH + H(+). It catalyses the reaction 2-methyl-3-oxopropanoate + NAD(+) + CoA + H2O = propanoyl-CoA + hydrogencarbonate + NADH + H(+). Its pathway is polyol metabolism; myo-inositol degradation into acetyl-CoA; acetyl-CoA from myo-inositol: step 7/7. Its function is as follows. Catalyzes the oxidation of malonate semialdehyde (MSA) and methylmalonate semialdehyde (MMSA) into acetyl-CoA and propanoyl-CoA, respectively. Is involved in a myo-inositol catabolic pathway. Bicarbonate, and not CO2, is the end-product of the enzymatic reaction. This chain is Malonate-semialdehyde dehydrogenase, found in Listeria monocytogenes serotype 4b (strain F2365).